Consider the following 1687-residue polypeptide: A-kinase anchor protein 12 (1687 aa).

The tract at residues Met1–Ala108 is disordered. Gly2 carries N-myristoyl glycine lipidation. A phosphoserine mark is found at Ser11, Ser18, Ser22, and Ser27. Positions Gly30 to Ala48 are enriched in low complexity. Residues Pro52–Asn62 show a composition bias toward polar residues. The span at Glu75 to Asp88 shows a compositional bias: acidic residues. A compositionally biased stretch (basic and acidic residues) spans Val89–Glu105. Phosphoserine is present on residues Ser136 and Ser204. Disordered stretches follow at residues Ser175 to Ser282 and Lys298 to Lys355. A compositionally biased stretch (basic and acidic residues) spans Ala213–Leu230. A phosphoserine mark is found at Ser235 and Ser245. Over residues Gln247 to Glu259 the composition is skewed to acidic residues. Residues Lys254–Ser544 form an involved in PKC-binding region. 4 positions are modified to phosphoserine: Ser268, Ser271, Ser274, and Ser304. Positions Ser268 to Ser282 are enriched in low complexity. Residues Lys303–Glu321 are compositionally biased toward basic and acidic residues. Thr331 carries the phosphothreonine modification. Residues Ala334–Thr344 show a composition bias toward acidic residues. Ser335 and Ser350 each carry phosphoserine. A Phosphotyrosine modification is found at Tyr353. Residue Ser371 is modified to Phosphoserine. Residues Val402–Gly481 form a disordered region. Over residues Gly417–Glu426 the composition is skewed to low complexity. Position 469 is a phosphoserine (Ser469). Residues Pro470–Glu480 are compositionally biased toward basic and acidic residues. Phosphoserine occurs at positions 491, 507, and 509. A disordered region spans residues Lys496–Ala828. A compositionally biased stretch (low complexity) spans Gly499–Lys513. Residues Leu514 to Arg523 are compositionally biased toward basic residues. Residues Glu533–Gly550 are compositionally biased toward basic and acidic residues. Ser541, Ser544, Ser585, Ser599, Ser614, and Ser616 each carry phosphoserine. Positions Ile594–Ser614 match the AKAP CaM-binding 1 motif. Positions Arg612 to Lys626 are enriched in basic and acidic residues. Over residues Ala628–Glu639 the composition is skewed to polar residues. Thr629 bears the Phosphothreonine mark. Phosphoserine is present on residues Ser631, Ser632, Ser635, and Ser638. The span at Asp642–Asp661 shows a compositional bias: basic and acidic residues. Ser683, Ser684, and Ser685 each carry phosphoserine. Positions Asp697 to Gly711 are enriched in basic and acidic residues. Over residues Ala717–Gln726 the composition is skewed to polar residues. The span at Gly727–Ser744 shows a compositional bias: low complexity. Phosphoserine occurs at positions 736, 748, 770, 771, and 789. The short motif at Val743–Leu763 is the AKAP CaM-binding 2 element. The short motif at Glu784–Gly804 is the AKAP CaM-binding 3 element. The residue at position 871 (Thr871) is a Phosphothreonine. Ser873 is subject to Phosphoserine. Residues Glu959–Met981 are disordered. Lys1030 is covalently cross-linked (Glycyl lysine isopeptide (Lys-Gly) (interchain with G-Cter in SUMO1)). Residues Val1035–Gly1045 are compositionally biased toward polar residues. 4 disordered regions span residues Val1035 to Ala1105, Ala1125 to Ala1221, Cys1277 to Ala1361, and Thr1443 to Glu1487. Ser1059 bears the Phosphoserine mark. Over residues Ser1130–Asp1157 the composition is skewed to polar residues. A compositionally biased stretch (basic and acidic residues) spans Gln1199–Leu1211. Phosphoserine is present on Ser1289. Positions Asp1298–Gln1310 are enriched in basic and acidic residues. Phosphoserine occurs at positions 1348, 1352, and 1354. Over residues Gln1462–Glu1487 the composition is skewed to basic and acidic residues. An RII-binding region spans residues Glu1498–Ile1511. Disordered stretches follow at residues Glu1522–Ser1582 and Ile1599–Ser1687. Polar residues predominate over residues Tyr1530–Gln1547. A phosphoserine mark is found at Ser1543 and Ser1571. Low complexity predominate over residues Gln1618–Ser1630. At Ser1637 the chain carries Phosphoserine. Basic and acidic residues predominate over residues Leu1645 to Ser1687.

As to quaternary structure, binds to dimeric RII-alpha regulatory subunit of PKC. Post-translationally, phosphorylated by PKC (in vitro).

It localises to the cytoplasm. The protein resides in the cytoskeleton. Its subcellular location is the membrane. In terms of biological role, anchoring protein that mediates the subcellular compartmentation of protein kinase A (PKA) and protein kinase C (PKC). The protein is A-kinase anchor protein 12 (Akap12) of Rattus norvegicus (Rat).